A 234-amino-acid polypeptide reads, in one-letter code: MKIIRVQDQIEGGKIAFTLLKDSLAKGAKTLGLATGSSPISFYQEMVKSPLDFSDLTSINLDEYVGLSVESDQSYDYFMRQNLFNAKPFKKNYLPNGLATDIEAEAKRYDQIIAEHPIDFQVLGIGRNGHIGFNEPGTSFEEETHVVDLQESTIEANSRFFTSIEDVPKQAISMGIASIMKSKMIVLLAFGQEKADAIKGMVFGPITEDLPASILQKHDHVIVIVDEAAASQLD.

The Proton acceptor; for enolization step role is filled by Asp-62. Asn-128 serves as the catalytic For ring-opening step. The active-site Proton acceptor; for ring-opening step is the His-130. Glu-135 acts as the For ring-opening step in catalysis.

The protein belongs to the glucosamine/galactosamine-6-phosphate isomerase family. NagB subfamily.

It catalyses the reaction alpha-D-glucosamine 6-phosphate + H2O = beta-D-fructose 6-phosphate + NH4(+). It functions in the pathway amino-sugar metabolism; N-acetylneuraminate degradation; D-fructose 6-phosphate from N-acetylneuraminate: step 5/5. Its function is as follows. Catalyzes the reversible isomerization-deamination of glucosamine 6-phosphate (GlcN6P) to form fructose 6-phosphate (Fru6P) and ammonium ion. The polypeptide is Glucosamine-6-phosphate deaminase (Streptococcus pyogenes serotype M3 (strain ATCC BAA-595 / MGAS315)).